Here is a 478-residue protein sequence, read N- to C-terminus: Endoplasmic reticulum oxidoreductin-1 (478 aa).

An N-terminal signal peptide occupies residues 1 to 20; the sequence is MREPLLQLIVLSLIIIVVNT. Intrachain disulfides connect C28/C41, C30/C39, C79/C384, C88/C93, C209/C230, and C387/C390. The tract at residues 117–143 is disordered; it reads AAVKEEEDDDAEKCADAGNNIDPMDRT. Residues R188, T190, and W201 each coordinate FAD. 4 residues coordinate FAD: S241, H244, R283, and R295. N377 carries an N-linked (GlcNAc...) asparagine glycan. Residues 459 to 478 form a disordered region; it reads ESVMNTAADGPPRKSNKIDL.

Belongs to the EROs family. As to quaternary structure, may function both as a monomer and a homodimer. FAD is required as a cofactor.

Its subcellular location is the endoplasmic reticulum membrane. Its function is as follows. Oxidoreductase involved in disulfide bond formation in the endoplasmic reticulum. Efficiently reoxidizes pdi-1, the enzyme catalyzing protein disulfide formation, in order to allow pdi-1 to sustain additional rounds of disulfide formation. Following pdi reoxidation, passes its electrons to molecular oxygen via FAD, leading to the production of reactive oxygen species (ROS) in the cell. This is Endoplasmic reticulum oxidoreductin-1 (ero-1) from Caenorhabditis elegans.